The primary structure comprises 347 residues: Holliday junction branch migration complex subunit RuvB (347 aa).

The interval 1-182 is large ATPase domain (RuvB-L); it reads MSAQNPVLTP…FGIPVRLSFY (182 aa). Residues L21, R22, G63, K66, T67, T68, 129–131, R172, Y182, and R219 each bind ATP; that span reads EDF. Residue T67 participates in Mg(2+) binding. The interval 183 to 253 is small ATPAse domain (RuvB-S); sequence TVEELELIVR…IADEALTRLL (71 aa). The tract at residues 256 to 347 is head domain (RuvB-H); it reads NMGLDQLDTR…QFRLTLEDDD (92 aa). The DNA site is built by R292, R311, and R316.

This sequence belongs to the RuvB family. In terms of assembly, homohexamer. Forms an RuvA(8)-RuvB(12)-Holliday junction (HJ) complex. HJ DNA is sandwiched between 2 RuvA tetramers; dsDNA enters through RuvA and exits via RuvB. An RuvB hexamer assembles on each DNA strand where it exits the tetramer. Each RuvB hexamer is contacted by two RuvA subunits (via domain III) on 2 adjacent RuvB subunits; this complex drives branch migration. In the full resolvosome a probable DNA-RuvA(4)-RuvB(12)-RuvC(2) complex forms which resolves the HJ.

The protein localises to the cytoplasm. The catalysed reaction is ATP + H2O = ADP + phosphate + H(+). The RuvA-RuvB-RuvC complex processes Holliday junction (HJ) DNA during genetic recombination and DNA repair, while the RuvA-RuvB complex plays an important role in the rescue of blocked DNA replication forks via replication fork reversal (RFR). RuvA specifically binds to HJ cruciform DNA, conferring on it an open structure. The RuvB hexamer acts as an ATP-dependent pump, pulling dsDNA into and through the RuvAB complex. RuvB forms 2 homohexamers on either side of HJ DNA bound by 1 or 2 RuvA tetramers; 4 subunits per hexamer contact DNA at a time. Coordinated motions by a converter formed by DNA-disengaged RuvB subunits stimulates ATP hydrolysis and nucleotide exchange. Immobilization of the converter enables RuvB to convert the ATP-contained energy into a lever motion, pulling 2 nucleotides of DNA out of the RuvA tetramer per ATP hydrolyzed, thus driving DNA branch migration. The RuvB motors rotate together with the DNA substrate, which together with the progressing nucleotide cycle form the mechanistic basis for DNA recombination by continuous HJ branch migration. Branch migration allows RuvC to scan DNA until it finds its consensus sequence, where it cleaves and resolves cruciform DNA. The sequence is that of Holliday junction branch migration complex subunit RuvB from Allorhizobium ampelinum (strain ATCC BAA-846 / DSM 112012 / S4) (Agrobacterium vitis (strain S4)).